The following is a 336-amino-acid chain: Transcription factor MYB29 (336 aa).

HTH myb-type domains are found at residues 9–65 and 66–116; these read GEGL…KPDI and KRGE…KKLL. DNA-binding regions (H-T-H motif) lie at residues 37-61 and 89-112; these read WRDI…ANYL and WSVI…NTHL. Positions 127-170 are disordered; it reads KPLAYDSNPDEQSQSGSISPKSLPPSSSKNVPEITSSDETPKYD. Positions 141–154 are enriched in low complexity; it reads SGSISPKSLPPSSS. The segment covering 155–164 has biased composition (polar residues); it reads KNVPEITSSD.

Can form complexes with MYC2, MYC3 or MYC4. Expressed in both vegetative and generative organs. Mostly present in seedlings, inflorescences, roots and stems, and, to a lower extent, in leaves (in midvein and trichomes) and siliques.

It localises to the nucleus. In terms of biological role, plays a minor rheostat role in aliphatic glucosinolates (GLSs) biosynthesis, mostly short chained. Together with MYB28/HAG1 and MYB76/HAG2, promotes aliphatic glucosinolate biosynthesis but represses indolic glucosinolate biosynthesis. Prevents insect performance (e.g. lepidopteran insect Mamestra brassicae) by promoting glucosinolates. This is Transcription factor MYB29 (MYB29) from Arabidopsis thaliana (Mouse-ear cress).